The following is a 216-amino-acid chain: Elongation factor Ts (216 aa).

Residues 80-83 (TDFV) form an involved in Mg(2+) ion dislocation from EF-Tu region.

This sequence belongs to the EF-Ts family.

Its subcellular location is the cytoplasm. Its function is as follows. Associates with the EF-Tu.GDP complex and induces the exchange of GDP to GTP. It remains bound to the aminoacyl-tRNA.EF-Tu.GTP complex up to the GTP hydrolysis stage on the ribosome. The sequence is that of Elongation factor Ts from Alkaliphilus oremlandii (strain OhILAs) (Clostridium oremlandii (strain OhILAs)).